We begin with the raw amino-acid sequence, 354 residues long: Trans-enoyl reductase pydC (354 aa).

An Enoyl reductase (ER) domain is found at 16–342 (ANTDPVTFEI…RREVSGEKIV (327 aa)). NADP(+)-binding positions include 51-54 (CDYK), 180-183 (SPKN), Tyr-198, 245-246 (FE), and 336-337 (VS).

It belongs to the zinc-containing alcohol dehydrogenase family. As to quaternary structure, monomer.

Its pathway is mycotoxin biosynthesis. Its function is as follows. Trans-enoyl reductase; part of the gene cluster that mediates the biosynthesis of pyrrocidines, fungal natural products containing a macrocyclic para-cyclophane connected to a decahydrofluorene ring system that show potent antibiotic activities toward Gram-negative bacteria. Within the pathway, the PKS-NRPS pydA, with the help of the trans-enoyl reductase pydC, synthesize the polyketide-tyrosyl acyl thioester product which can be reductively off-loaded by the terminal reductase (R) domain in pydA. The PKS module of pydA acts in combination with the trans-acting enoyl reductase pydC to produce a methylated polyketide attached to the ACP domain. In parallel, the adenylation (A) domain of the NRPS module activated L-tyrosine, which is then transferred to the ACP domain. The condensation (C) domain subsequently link this group to the polyketide chain, forming an enzyme-bound amide. The alpha/beta hydrolase pydG is then required to catalyze the subsequent Knoevenagel condensation that affords the 3-pyrrolin-2-one ring, whereas the four proteins pydB, pydE, pydX and pydZ then function synergistically to form the cyclophane. PydB and the membrane-bound pydX and pydZ are lipid-binding proteins that can sequester and mold the pdyG product into the inverse S-shape. Binding of the medium chain reductase pydE to the complex would trigger the cascade oxidative cyclization. PydY is involved in the Diels-Alder cycloaddition that forms the decahydrofluorene core. Additional non-enzymatic hydroxylation yields pyrrocidine A2 which can be further reduced into pyrrocidine B by an endogenous reductase. The polypeptide is Trans-enoyl reductase pydC (Acremonium sp).